The following is a 126-amino-acid chain: MPFNGTWQVYSQENYEAFLRAVGLPEDIINVAKDINPIIEIQQNGDNFVVTSKTPNQSVTNSFTIGKEAEITSMGGKKIKCTVVLEGGKLVSKTDQFSHIQEVKGNEMVETLTVGGATLIRRSKRV.

Cholate is bound by residues 54–56, 99–101, and arginine 121; these read TPN and HIQ.

This sequence belongs to the calycin superfamily. Fatty-acid binding protein (FABP) family.

It is found in the cytoplasm. In terms of biological role, binds free fatty acids and their coenzyme A derivatives, bilirubin, and some other small molecules in the cytoplasm. May be involved in intracellular lipid transport. The specificity of axolotl L-FABP differs from that of LB-FABP. Binds 2 ligands per protein molecule. The sequence is that of Fatty acid-binding protein 2, liver from Ambystoma mexicanum (Axolotl).